Reading from the N-terminus, the 487-residue chain is L-tartrate/succinate antiporter (487 aa).

The next 14 helical transmembrane spans lie at 10-30 (YLAP…AGLE), 33-53 (TWLY…EPVP), 54-74 (GAVV…WLLF), 93-113 (WAVS…FMFG), 137-157 (TLFL…VTPS), 189-209 (IGSY…AIFL), 236-256 (FLGM…LAYV), 292-312 (LMVG…AAMV), 313-333 (GYSV…DIVS), 340-360 (VFFW…TGFI), 370-390 (SLSG…FYLL), 393-413 (FFAS…AAAL), 418-438 (IPLP…SILT), and 465-485 (IFGL…MPVV).

This sequence belongs to the SLC13A/DASS transporter (TC 2.A.47) family. DIT1 subfamily.

The protein resides in the cell inner membrane. It catalyses the reaction (2R,3R)-tartrate(out) + succinate(in) = (2R,3R)-tartrate(in) + succinate(out). Functionally, catalyzes the uptake of tartrate in exchange for intracellular succinate. Essential for anaerobic L-tartrate fermentation. This Escherichia coli O6:K15:H31 (strain 536 / UPEC) protein is L-tartrate/succinate antiporter (ttdT).